Reading from the N-terminus, the 308-residue chain is 1D-myo-inositol 2-acetamido-2-deoxy-alpha-D-glucopyranoside deacetylase (308 aa).

Residues histidine 18, aspartate 21, and histidine 153 each contribute to the Zn(2+) site.

Belongs to the MshB deacetylase family. It depends on Zn(2+) as a cofactor.

The catalysed reaction is 1D-myo-inositol 2-acetamido-2-deoxy-alpha-D-glucopyranoside + H2O = 1D-myo-inositol 2-amino-2-deoxy-alpha-D-glucopyranoside + acetate. In terms of biological role, catalyzes the deacetylation of 1D-myo-inositol 2-acetamido-2-deoxy-alpha-D-glucopyranoside (GlcNAc-Ins) in the mycothiol biosynthesis pathway. The polypeptide is 1D-myo-inositol 2-acetamido-2-deoxy-alpha-D-glucopyranoside deacetylase (Salinispora arenicola (strain CNS-205)).